The primary structure comprises 628 residues: Phosphomethylpyrimidine synthase (628 aa).

A disordered region spans residues 1-22 (MSKQEKTINLSESAQVDQQSVQ). Residues 7–22 (TINLSESAQVDQQSVQ) are compositionally biased toward polar residues. Substrate contacts are provided by residues Asn232, Met261, Tyr290, His326, 346 to 348 (SRG), 387 to 390 (DGLR), and Glu426. A Zn(2+)-binding site is contributed by His430. A substrate-binding site is contributed by Tyr453. His494 lines the Zn(2+) pocket. Residues Cys574, Cys577, and Cys582 each coordinate [4Fe-4S] cluster.

Belongs to the ThiC family. As to quaternary structure, homodimer. Requires [4Fe-4S] cluster as cofactor.

It carries out the reaction 5-amino-1-(5-phospho-beta-D-ribosyl)imidazole + S-adenosyl-L-methionine = 4-amino-2-methyl-5-(phosphooxymethyl)pyrimidine + CO + 5'-deoxyadenosine + formate + L-methionine + 3 H(+). Its pathway is cofactor biosynthesis; thiamine diphosphate biosynthesis. Its function is as follows. Catalyzes the synthesis of the hydroxymethylpyrimidine phosphate (HMP-P) moiety of thiamine from aminoimidazole ribotide (AIR) in a radical S-adenosyl-L-methionine (SAM)-dependent reaction. The protein is Phosphomethylpyrimidine synthase of Pseudomonas putida (strain W619).